We begin with the raw amino-acid sequence, 64 residues long: MPKNKTHSGASKRFKITGSGKVLRERAGKRHLLEHKSSKKTRSLTGTVVVAPADAKKIKKLLGK.

2 stretches are compositionally biased toward basic residues: residues 1 to 15 and 27 to 42; these read MPKN…KRFK and AGKR…KKTR. A disordered region spans residues 1–45; the sequence is MPKNKTHSGASKRFKITGSGKVLRERAGKRHLLEHKSSKKTRSLT.

This sequence belongs to the bacterial ribosomal protein bL35 family.

This chain is Large ribosomal subunit protein bL35, found in Streptomyces griseus subsp. griseus (strain JCM 4626 / CBS 651.72 / NBRC 13350 / KCC S-0626 / ISP 5235).